A 1846-amino-acid polypeptide reads, in one-letter code: Unconventional myosin-Vb (1846 aa).

Residues serine 8–proline 60 form the Myosin N-terminal SH3-like domain. Residues valine 21–leucine 40 form a requires for interaction with LIMA1 region. In terms of domain architecture, Myosin motor spans valine 69–alanine 763. Residue glycine 163–threonine 170 coordinates ATP. Residues valine 599–histidine 629 are disordered. Residues serine 607–arginine 619 are compositionally biased toward low complexity. Positions leucine 641–aspartate 663 are actin-binding. 6 IQ domains span residues arginine 767–arginine 788, leucine 789–arginine 813, arginine 814–valine 837, arginine 838–leucine 861, threonine 862–arginine 884, and glutamine 885–serine 914. Coiled-coil stretches lie at residues alanine 915 to arginine 1272 and leucine 1334 to glutamate 1450. A disordered region spans residues arginine 1088–aspartate 1122. Residues proline 1100–isoleucine 1120 are compositionally biased toward polar residues. Serine 1444 carries the post-translational modification Phosphoserine. The Dilute domain maps to serine 1524 to glutamate 1801.

The protein belongs to the TRAFAC class myosin-kinesin ATPase superfamily. Myosin family. As to quaternary structure, component of the CART complex, at least composed of ACTN4, HGS/HRS, MYO5B and TRIM3. Interacts with RAB11FIP2. Interacts with RAB11A and RAB8A. Found in a complex with CFTR and RAB11A. Interacts with NPC1L1. Interacts with LIMA1.

The protein localises to the cytoplasm. May be involved in vesicular trafficking via its association with the CART complex. The CART complex is necessary for efficient transferrin receptor recycling but not for EGFR degradation. Required in a complex with RAB11A and RAB11FIP2 for the transport of NPC1L1 to the plasma membrane. Together with RAB11A participates in CFTR trafficking to the plasma membrane and TF (transferrin) recycling in nonpolarized cells. Together with RAB11A and RAB8A participates in epithelial cell polarization. Together with RAB25 regulates transcytosis. Required for proper localization of bile salt export pump ABCB11 at the apical/canalicular plasma membrane of hepatocytes. This chain is Unconventional myosin-Vb (Myo5b), found in Rattus norvegicus (Rat).